Here is a 104-residue protein sequence, read N- to C-terminus: Protein EPIDERMAL PATTERNING FACTOR 1 (104 aa).

The signal sequence occupies residues 1-20; it reads MKSLLLLAFFLSFFFGSLLA. Intrachain disulfides connect cysteine 60-cysteine 94, cysteine 64-cysteine 70, cysteine 67-cysteine 96, and cysteine 79-cysteine 88. Asparagine 98 carries an N-linked (GlcNAc...) asparagine glycan.

The protein belongs to the plant cysteine rich small secretory peptide family. Epidermal patterning factor subfamily. In terms of assembly, interacts with ERECTA and ERL1, but not with TMM. In terms of tissue distribution, expressed in shoots, but not in roots. Mostly localized in developing leaves, specifically in meristemoids, guard mother cells (GMCs), and young guard cells.

It is found in the secreted. In terms of biological role, controls stomatal patterning. Regulates asymmetric cell division during guard cell differentiation. Mediates stomatal development inhibition. Not cleaved by the protease CRSP (AC Q9LNU1). MEPF1: mobile signal controlling stomatal development in a non-cell-autonomous manner. Uses ERL1 as major receptor. May act by competing with somatogen (AC Q9SV72) for the same receptor, TMM (AC Q9SSD1). In Arabidopsis thaliana (Mouse-ear cress), this protein is Protein EPIDERMAL PATTERNING FACTOR 1.